Consider the following 118-residue polypeptide: MICOS complex subunit MIC13 (118 aa).

The Mitochondrial matrix segment spans residues 1-7; the sequence is MVARVWS. The helical transmembrane segment at 8-26 threads the bilayer; the sequence is LMRFLIKGSVAGGAVYLVY. The Mitochondrial intermembrane segment spans residues 27–118; it reads DQELLGPSDK…GWEYVKARTK (92 aa).

This sequence belongs to the MICOS complex subunit Mic13 family. In terms of assembly, component of the mitochondrial contact site and cristae organizing system (MICOS) complex, composed of at least MICOS10/MIC10, CHCHD3/MIC19, CHCHD6/MIC25, APOO/MIC26, MICOS13/MIC13, APOOL/MIC27 and IMMT/MIC60. The MICOS complex associates with mitochondrial outer membrane proteins SAMM50, MTX1 and MTX2 (together described as components of the mitochondrial outer membrane sorting assembly machinery (SAM) complex) and DNAJC11, mitochondrial inner membrane protein TMEM11 and with HSPA9. The MICOS and SAM complexes together with DNAJC11 are part of a large protein complex spanning both membranes termed the mitochondrial intermembrane space bridging (MIB) complex.

It localises to the mitochondrion inner membrane. In terms of biological role, component of the MICOS complex, a large protein complex of the mitochondrial inner membrane that plays crucial roles in the maintenance of crista junctions, inner membrane architecture, and formation of contact sites to the outer membrane. Constituent of mature MICOS complex, it is required for the formation of cristae junction (CJ) and maintenance of cristae morphology. Required for the incorporation of MICOS10/MIC10 into the MICOS complex. The protein is MICOS complex subunit MIC13 of Homo sapiens (Human).